Consider the following 192-residue polypeptide: Transcription termination/antitermination protein NusG (192 aa).

In terms of domain architecture, KOW spans 140-168 (VGEIVIVTDGPFETFTGTVEEIDQEKNRL).

Belongs to the NusG family.

Participates in transcription elongation, termination and antitermination. This chain is Transcription termination/antitermination protein NusG, found in Rickettsia felis (strain ATCC VR-1525 / URRWXCal2) (Rickettsia azadi).